The chain runs to 459 residues: Argininosuccinate lyase (459 aa).

This sequence belongs to the lyase 1 family. Argininosuccinate lyase subfamily.

It is found in the cytoplasm. The enzyme catalyses 2-(N(omega)-L-arginino)succinate = fumarate + L-arginine. Its pathway is amino-acid biosynthesis; L-arginine biosynthesis; L-arginine from L-ornithine and carbamoyl phosphate: step 3/3. The chain is Argininosuccinate lyase from Desulforudis audaxviator (strain MP104C).